The primary structure comprises 212 residues: Pyridoxine/pyridoxamine 5'-phosphate oxidase (212 aa).

Residues 8 to 11 (RREY) and lysine 66 each bind substrate. FMN is bound by residues 61–66 (RIVLLK), 76–77 (FT), arginine 82, lysine 83, and glutamine 105. Positions 123, 127, and 131 each coordinate substrate. Residues 140–141 (QS) and tryptophan 185 contribute to the FMN site. 191 to 193 (RLH) contributes to the substrate binding site. An FMN-binding site is contributed by arginine 195.

The protein belongs to the pyridoxamine 5'-phosphate oxidase family. Homodimer. FMN serves as cofactor.

The enzyme catalyses pyridoxamine 5'-phosphate + O2 + H2O = pyridoxal 5'-phosphate + H2O2 + NH4(+). It carries out the reaction pyridoxine 5'-phosphate + O2 = pyridoxal 5'-phosphate + H2O2. It participates in cofactor metabolism; pyridoxal 5'-phosphate salvage; pyridoxal 5'-phosphate from pyridoxamine 5'-phosphate: step 1/1. The protein operates within cofactor metabolism; pyridoxal 5'-phosphate salvage; pyridoxal 5'-phosphate from pyridoxine 5'-phosphate: step 1/1. Its function is as follows. Catalyzes the oxidation of either pyridoxine 5'-phosphate (PNP) or pyridoxamine 5'-phosphate (PMP) into pyridoxal 5'-phosphate (PLP). This Shewanella oneidensis (strain ATCC 700550 / JCM 31522 / CIP 106686 / LMG 19005 / NCIMB 14063 / MR-1) protein is Pyridoxine/pyridoxamine 5'-phosphate oxidase.